The primary structure comprises 473 residues: Protein TED1 (473 aa).

At 1–8 (MLRCAVKK) the chain is on the cytoplasmic side. The helical transmembrane segment at 9-29 (FAYFATFLTIVANIYIYTYPS) threads the bilayer. Topologically, residues 30–451 (FHPEQCSWNC…FSLCPFAIQH (422 aa)) are lumenal. Residues asparagine 38, asparagine 147, asparagine 229, asparagine 266, and asparagine 307 are each glycosylated (N-linked (GlcNAc...) asparagine). Residues 452 to 472 (VWWFAKVSLLVTIFTWSSLLF) form a helical membrane-spanning segment. Residue valine 473 is a topological domain, cytoplasmic.

In terms of processing, N-glycosylated.

The protein resides in the endoplasmic reticulum membrane. Its function is as follows. Acts together with EMP24 and ERV25 in cargo exit from the endoplasmic reticulum. This chain is Protein TED1 (TED1), found in Saccharomyces cerevisiae (strain ATCC 204508 / S288c) (Baker's yeast).